The following is a 506-amino-acid chain: Aminoaldehyde dehydrogenase 1b (506 aa).

A Na(+)-binding site is contributed by aspartate 102. NAD(+) contacts are provided by residues 162 to 164 (TPW) and 188 to 191 (KPSE). Leucine 192 is a binding site for Na(+). Residues 242-245 (SFET) and glutamate 263 each bind NAD(+). Glutamate 263 serves as the catalytic Proton acceptor. Cysteine 297 acts as the Nucleophile in catalysis. The NAD(+) site is built by glutamate 396 and tryptophan 462.

Belongs to the aldehyde dehydrogenase family.

It carries out the reaction 4-aminobutanal + NAD(+) + H2O = 4-aminobutanoate + NADH + 2 H(+). The enzyme catalyses 3-aminopropanal + NAD(+) + H2O = beta-alanine + NADH + 2 H(+). The catalysed reaction is 4-(trimethylamino)butanal + NAD(+) + H2O = 4-(trimethylamino)butanoate + NADH + 2 H(+). It catalyses the reaction 4-guanidinobutanal + NAD(+) + H2O = 4-guanidinobutanoate + NADH + 2 H(+). It carries out the reaction betaine aldehyde + NAD(+) + H2O = glycine betaine + NADH + 2 H(+). It functions in the pathway amine and polyamine biosynthesis; betaine biosynthesis via choline pathway; betaine from betaine aldehyde: step 1/1. Dehydrogenase that catalyzes the oxidation of several aminoaldehydes. Metabolizes and detoxifies aldehyde products of polyamine degradation to non-toxic amino acids. Catalyzes the oxidation of 4-aminobutanal and 3-aminopropanal to 4-aminobutanoate and beta-alanine, respectively. Catalyzes the oxidation of 4-(trimethylamino)butanal and 4-guanidinobutanal to 4-trimethylammoniobutanoate and 4-guanidinobutanoate, respectively. Catalyzes the oxidation of betaine aldehyde to glycine betaine. In Zea mays (Maize), this protein is Aminoaldehyde dehydrogenase 1b.